Reading from the N-terminus, the 315-residue chain is tRNA-dihydrouridine(16) synthase (315 aa).

FMN contacts are provided by residues 7–9 (PME) and Q68. C98 (proton donor) is an active-site residue. Residues K139, 199–201 (NGE), and 223–224 (GR) each bind FMN.

It belongs to the Dus family. DusC subfamily. The cofactor is FMN.

The enzyme catalyses 5,6-dihydrouridine(16) in tRNA + NADP(+) = uridine(16) in tRNA + NADPH + H(+). It catalyses the reaction 5,6-dihydrouridine(16) in tRNA + NAD(+) = uridine(16) in tRNA + NADH + H(+). In terms of biological role, catalyzes the synthesis of 5,6-dihydrouridine (D), a modified base found in the D-loop of most tRNAs, via the reduction of the C5-C6 double bond in target uridines. Specifically modifies U16 in tRNAs. The polypeptide is tRNA-dihydrouridine(16) synthase (Aquipseudomonas alcaligenes (Pseudomonas alcaligenes)).